A 232-amino-acid chain; its full sequence is Small ribosomal subunit protein uS3 (232 aa).

The region spanning 39 to 107 (VRQYLTKALK…PAQINIAEVR (69 aa)) is the KH type-2 domain.

The protein belongs to the universal ribosomal protein uS3 family. In terms of assembly, part of the 30S ribosomal subunit. Forms a tight complex with proteins S10 and S14.

Functionally, binds the lower part of the 30S subunit head. Binds mRNA in the 70S ribosome, positioning it for translation. In Pseudoalteromonas atlantica (strain T6c / ATCC BAA-1087), this protein is Small ribosomal subunit protein uS3.